Here is an 84-residue protein sequence, read N- to C-terminus: Uracil-DNA glycosylase inhibitor (84 aa).

In terms of biological role, this protein binds specifically and reversibly to the host uracil-DNA glycosylase, preventing removal of uracil residues from PBS2 DNA by the host uracil-excision repair system. The polypeptide is Uracil-DNA glycosylase inhibitor (UGI) (Bacillus subtilis (Bacteriophage PBS2)).